The following is a 618-amino-acid chain: Putative ATP-dependent DNA helicase Q1 (618 aa).

The region spanning 95–270 is the Helicase ATP-binding domain; that stretch reads INAVMSKEDA…KKMLGIPVAI (176 aa). 108 to 115 is a binding site for ATP; that stretch reads LSTGGGKS. The DEVH box motif lies at 214-217; it reads DEVH. The region spanning 295–443 is the Helicase C-terminal domain; it reads CVEKIVRTIK…NLYNMVRYAS (149 aa). Positions 448, 466, 470, and 473 each coordinate Zn(2+). The segment at 586-618 is disordered; sequence KGRAEENNRKRKAAVTSSDEEVDVGDDDDVITL. The span at 603–618 shows a compositional bias: acidic residues; that stretch reads SDEEVDVGDDDDVITL.

This sequence belongs to the helicase family. RecQ subfamily. Zn(2+) is required as a cofactor.

The protein resides in the nucleus. The enzyme catalyses Couples ATP hydrolysis with the unwinding of duplex DNA by translocating in the 3'-5' direction.. It carries out the reaction ATP + H2O = ADP + phosphate + H(+). Its function is as follows. DNA helicase that may play a role in the repair of DNA that is damaged by ultraviolet light or other mutagens. Exhibits a magnesium-dependent ATP-dependent DNA-helicase activity that unwinds single- and double-stranded DNA in a 3'-5' direction. This Caenorhabditis briggsae protein is Putative ATP-dependent DNA helicase Q1.